A 213-amino-acid polypeptide reads, in one-letter code: Peroxisomal protein 2 (213 aa).

The Peroxisomal target signal 1 (PTS1) signature appears at 211 to 213 (ETL).

It belongs to the PXP2 family.

It is found in the peroxisome matrix. The protein localises to the cytoplasm. The protein resides in the cytosol. Its subcellular location is the nucleus. Functionally, probably involved in peroxisome formation or maintenance as well as in amino acid metabolism. The sequence is that of Peroxisomal protein 2 from Schizosaccharomyces pombe (strain 972 / ATCC 24843) (Fission yeast).